We begin with the raw amino-acid sequence, 255 residues long: Flagellar L-ring protein (255 aa).

Residues 1–25 (MRRHSTRKTVARVAVVALAVGVLAG) form the signal peptide. Cys-26 carries the N-palmitoyl cysteine lipid modification. Cys-26 carries the S-diacylglycerol cysteine lipid modification.

This sequence belongs to the FlgH family. In terms of assembly, the basal body constitutes a major portion of the flagellar organelle and consists of four rings (L,P,S, and M) mounted on a central rod.

It is found in the cell outer membrane. Its subcellular location is the bacterial flagellum basal body. Its function is as follows. Assembles around the rod to form the L-ring and probably protects the motor/basal body from shearing forces during rotation. This Rhodospirillum rubrum (strain ATCC 11170 / ATH 1.1.1 / DSM 467 / LMG 4362 / NCIMB 8255 / S1) protein is Flagellar L-ring protein.